The chain runs to 159 residues: Transmembrane protein 42 (159 aa).

4 consecutive transmembrane segments (helical) span residues 37 to 57, 59 to 79, 100 to 120, and 124 to 144; these read FWGV…AASA, LAFG…VMAS, IASV…GYVL, and CQEV…TLIH.

The protein localises to the membrane. This chain is Transmembrane protein 42 (TMEM42), found in Homo sapiens (Human).